Consider the following 962-residue polypeptide: Ran-binding proteins 9/10 homolog (962 aa).

2 stretches are compositionally biased toward low complexity: residues 1-33 and 41-52; these read MENV…LSQS and APSTSRSHSHSP. Disordered regions lie at residues 1–246, 271–296, and 313–402; these read MENV…EQQP, EDDD…EVAS, and SSAS…QGVD. The segment covering 80–91 has biased composition (basic and acidic residues); sequence TEARENSPHDHS. Positions 118–132 are enriched in low complexity; sequence QQQQEAPPLQQDQQE. The segment covering 146 to 164 has biased composition (polar residues); it reads DQQNQEYPAVHQDQQAEQN. Positions 165-202 are enriched in basic and acidic residues; sequence QELHHIEGLIRHRESQNPEEHPPQASLENRETLGREDT. Residues 236–245 are compositionally biased toward polar residues; the sequence is SGSQDLNEQQ. Residues 271–284 show a composition bias toward acidic residues; that stretch reads EDDDEEVDEEEEVV. The segment covering 321 to 343 has biased composition (low complexity); the sequence is SSNNNNNNISNHNNNNNNSNSNS. Polar residues-rich tracts occupy residues 351-360 and 368-378; these read FYSNNGSHFS and NPRSSTQTSSP. Phosphoserine is present on residues Ser-387, Ser-393, and Ser-395. Residues 389–398 are compositionally biased toward polar residues; the sequence is PAASSNSPQH. In terms of domain architecture, B30.2/SPRY spans 400–587; that stretch reads GVDPLRLLYP…VDANFGQEPF (188 aa). Residues 617 to 649 form the LisH domain; the sequence is PENLMNRLVSTYLVHNAFSKTAEAFNGYTNQTF. A CTLH domain is found at 655 to 712; sequence SIKTRQKIIKLILTGKMSQAIEHTLRSFPGLLENNKNLWFALKCRQFIEMINGADIEN. The interval 800 to 820 is disordered; that stretch reads EMEPCQSHSNGGDSSSNGNAS. Residues 806 to 820 show a composition bias toward low complexity; that stretch reads SHSNGGDSSSNGNAS.

The protein belongs to the RANBP9/10 family. In terms of tissue distribution, expressed in the GSCs and in dividing cysts. Expression is reduced in the germline as individual egg chambers are formed. Isoform C is expressed in all somatic and germline cells of the ovary. Isoform D is expressed in the GSC niche.

It localises to the cytoplasm. The protein localises to the membrane. The protein resides in the nucleus. Its function is as follows. May be involved in JAK/STAT signaling. Isoform D is required for the proper arrangement of niche cells and is autonomously required for proper niche cell size, isoform C negatively regulates the adhesive properties of the niche. The germline stem cell (GSC) niche in ovaries is made up of two somatic cell types: 8-9 cells in a single-filed array make up the terminal filament (TF), and a tight cluster of 5 or 6 cap cells (CpC). Regulating the size and adhesive properties of the CpCs is an important component of the mechanism that controls their capacity to support stem cells, isoform C and isoform D are important factors in mediating this regulation. In contrast, isoform C acts as a positive regulator of cell adhesion in follicle cell epithelium. This Drosophila melanogaster (Fruit fly) protein is Ran-binding proteins 9/10 homolog (RanBPM).